A 243-amino-acid chain; its full sequence is Small ribosomal subunit protein uS3 (243 aa).

The region spanning 39–110 (IRTFIQKKYS…QVRINVVEVE (72 aa)) is the KH type-2 domain. Residues 221–243 (GAIPRRKGSRKPQQFEDRSNENS) form a disordered region. Positions 233-243 (QQFEDRSNENS) are enriched in basic and acidic residues.

Belongs to the universal ribosomal protein uS3 family. In terms of assembly, part of the 30S ribosomal subunit. Forms a tight complex with proteins S10 and S14.

In terms of biological role, binds the lower part of the 30S subunit head. Binds mRNA in the 70S ribosome, positioning it for translation. The sequence is that of Small ribosomal subunit protein uS3 from Prochlorococcus marinus subsp. pastoris (strain CCMP1986 / NIES-2087 / MED4).